The sequence spans 338 residues: Glycerol-3-phosphate dehydrogenase [NAD(P)+] 1 (338 aa).

NADPH-binding residues include Ser-11, Trp-12, His-32, Arg-33, and Lys-109. Sn-glycerol 3-phosphate contacts are provided by Lys-109, Gly-140, and Ser-142. Residue Ala-144 coordinates NADPH. Sn-glycerol 3-phosphate is bound by residues Lys-195, Asp-248, Ser-258, Arg-259, and Asn-260. The active-site Proton acceptor is the Lys-195. Arg-259 is an NADPH binding site. Residues Val-283 and Glu-285 each contribute to the NADPH site.

Belongs to the NAD-dependent glycerol-3-phosphate dehydrogenase family.

Its subcellular location is the cytoplasm. It catalyses the reaction sn-glycerol 3-phosphate + NAD(+) = dihydroxyacetone phosphate + NADH + H(+). The catalysed reaction is sn-glycerol 3-phosphate + NADP(+) = dihydroxyacetone phosphate + NADPH + H(+). It participates in membrane lipid metabolism; glycerophospholipid metabolism. Its function is as follows. Catalyzes the reduction of the glycolytic intermediate dihydroxyacetone phosphate (DHAP) to sn-glycerol 3-phosphate (G3P), the key precursor for phospholipid synthesis. This Lactobacillus delbrueckii subsp. bulgaricus (strain ATCC 11842 / DSM 20081 / BCRC 10696 / JCM 1002 / NBRC 13953 / NCIMB 11778 / NCTC 12712 / WDCM 00102 / Lb 14) protein is Glycerol-3-phosphate dehydrogenase [NAD(P)+] 1.